A 375-amino-acid chain; its full sequence is Histidine biosynthesis bifunctional protein HisB (375 aa).

The interval 1-168 (MTPIVFIDRD…GIAHTLADAP (168 aa)) is histidinol-phosphatase. Residue aspartate 8 is the Nucleophile of the active site. Mg(2+) is bound by residues aspartate 8, aspartate 10, and aspartate 128. Aspartate 10 acts as the Proton donor in catalysis. The interval 169-375 (RRAVVQRHTK…HVLPSTKGAL (207 aa)) is imidazoleglycerol-phosphate dehydratase.

It in the N-terminal section; belongs to the histidinol-phosphatase family. This sequence in the C-terminal section; belongs to the imidazoleglycerol-phosphate dehydratase family. It depends on Mg(2+) as a cofactor.

The protein localises to the cytoplasm. The enzyme catalyses D-erythro-1-(imidazol-4-yl)glycerol 3-phosphate = 3-(imidazol-4-yl)-2-oxopropyl phosphate + H2O. The catalysed reaction is L-histidinol phosphate + H2O = L-histidinol + phosphate. The protein operates within amino-acid biosynthesis; L-histidine biosynthesis; L-histidine from 5-phospho-alpha-D-ribose 1-diphosphate: step 6/9. It participates in amino-acid biosynthesis; L-histidine biosynthesis; L-histidine from 5-phospho-alpha-D-ribose 1-diphosphate: step 8/9. In Xylella fastidiosa (strain Temecula1 / ATCC 700964), this protein is Histidine biosynthesis bifunctional protein HisB.